A 287-amino-acid chain; its full sequence is Iron-sulfur cluster carrier protein (287 aa).

Position 47 to 54 (47 to 54 (GKGGVGKS)) interacts with ATP.

It belongs to the Mrp/NBP35 ATP-binding proteins family. In terms of assembly, homodimer.

In terms of biological role, binds and transfers iron-sulfur (Fe-S) clusters to target apoproteins. Can hydrolyze ATP. The chain is Iron-sulfur cluster carrier protein from Pseudomonas fragi.